The primary structure comprises 214 residues: Orotate phosphoribosyltransferase (214 aa).

Lysine 26 lines the 5-phospho-alpha-D-ribose 1-diphosphate pocket. 34–35 lines the orotate pocket; the sequence is FF. 5-phospho-alpha-D-ribose 1-diphosphate-binding positions include 72–73, arginine 99, lysine 100, lysine 103, histidine 105, and 124–132; these read YK and DDVITAGTA. Residues threonine 128 and arginine 157 each contribute to the orotate site.

Belongs to the purine/pyrimidine phosphoribosyltransferase family. PyrE subfamily. Homodimer. Requires Mg(2+) as cofactor.

It catalyses the reaction orotidine 5'-phosphate + diphosphate = orotate + 5-phospho-alpha-D-ribose 1-diphosphate. It participates in pyrimidine metabolism; UMP biosynthesis via de novo pathway; UMP from orotate: step 1/2. Catalyzes the transfer of a ribosyl phosphate group from 5-phosphoribose 1-diphosphate to orotate, leading to the formation of orotidine monophosphate (OMP). This is Orotate phosphoribosyltransferase from Pseudomonas fluorescens (strain Pf0-1).